The chain runs to 500 residues: NAD(P)H-quinone oxidoreductase chain 4, chloroplastic (500 aa).

13 consecutive transmembrane segments (helical) span residues 4–24 (FPWL…MLFL), 35–55 (YTIS…CYNF), 87–107 (IGTI…AFPV), 134–154 (LLLF…LLSM), 167–187 (FILY…GISL), 211–231 (ILFY…IPLH), 242–262 (HYST…YGLV), 272–292 (AHSM…IYAA), 305–325 (IAYS…SITD), 330–350 (GAIL…FLAG), 386–406 (LALP…GIIT), 416–436 (IFII…LLSM), and 462–482 (LFLS…PDFV).

The protein belongs to the complex I subunit 4 family.

The protein resides in the plastid. It is found in the chloroplast thylakoid membrane. It catalyses the reaction a plastoquinone + NADH + (n+1) H(+)(in) = a plastoquinol + NAD(+) + n H(+)(out). It carries out the reaction a plastoquinone + NADPH + (n+1) H(+)(in) = a plastoquinol + NADP(+) + n H(+)(out). The chain is NAD(P)H-quinone oxidoreductase chain 4, chloroplastic from Crucihimalaya wallichii (Rock-cress).